Here is a 569-residue protein sequence, read N- to C-terminus: RNA demethylase ALKBH10B (569 aa).

Positions Q118 to E151 form a coiled coil. A disordered region spans residues E164–Q190. The segment covering V167 to P179 has biased composition (acidic residues). Polar residues predominate over residues T180 to H189. The Fe cation site is built by H366, E368, and H421. Residue R430 participates in 2-oxoglutarate binding. The span at K531–L545 shows a compositional bias: basic residues. Positions K531–G569 are disordered. Residues A551–S560 show a composition bias toward low complexity.

It belongs to the alkB family. The cofactor is Fe(2+).

It catalyses the reaction an N(6)-methyladenosine in mRNA + 2-oxoglutarate + O2 = an adenosine in mRNA + formaldehyde + succinate + CO2. Functionally, dioxygenase that demethylates RNA by oxidative demethylation: specifically demethylates N(6)-methyladenosine (m6A) RNA, the most prevalent internal modification of messenger RNA (mRNA) in higher eukaryotes. ALKBH10B-mediated mRNA m6A demethylation stabilizes the mRNA of the key flowering time regulators FT, SPL3 and SPL9, which are involved in the control of floral transition. The sequence is that of RNA demethylase ALKBH10B from Arabidopsis thaliana (Mouse-ear cress).